A 1432-amino-acid polypeptide reads, in one-letter code: MSDIKQLLKEAKQELTNRDYEETIEISEKVLKLDPDNYFAHIFLGKALSSLPASNNVSSNRNLERATNHYVSAAKLVPDNLLAWKGLFLLFRTTEVVPDILSYDEYFDLCGQYADALLKQEQSQVELINDIKLLKKTHPDCQKAFYQHLKPGSLMAETIGRHLSTPQDALLNLIKILSNIETTEIGKTLSQNRLKLKASDPDYQIKLNSFSWEIIKNSEIDQLYNQLVNILADDQKRSEIENQWLEYRIKVLKSMPLDVKKDFFTKVKEMVEDMVLVNHQSLLAWQKYFEWTDYEDLDNMDAPLIIKYFKKFPKDPLAMILYSWLSSKLSKYDIKSLESANKPPEGHKKTEKETDIKDVDETNEDEVKDRVEDEVKDRVEDEVKDQDEEAKEDEEEDLDDIEIGLLEEEVVTVLTENIVKCKNNILAHRILCQYYLLTKEYEAALPYIKNGISLIAYNIKDLGVHLPLTKREFSLDLATVYTYVDAPKDHNAALKLYDNILSGDFSNIQAKMGKGIIFIERKNWKDAMTLLTQVHEQSPNNLEVLSELSWSKAHMGYMDEALAGLDTVIKGIKGMDLRSIDFRALNLWRQAKVYIMKHASINDAKQENVKCAFKLLIQSIKILDTFAPGFSTLGDIYCHYYKDHLRAFKCYFKAFDLDAGDYTAAKYITETYASKPNWQAASSIASRLIKGEKAKAELRSNNWPFRVVGIAHLEKQEESDSIEWFQSALRVDPNDVESWVGLGQAYHACGRIEASIKVFDKAIQLRPSHTFAQYFKAISLCDVGEYLESLDILEKVCQEAATEESFQIGLVEVLMRCSLDLYSQGFLLKSVSIAKDTIERIKIIISELKCENQQVWIYLSQVLRLFIWIESKVDTLPVESLVSIFENSQFSGSEEIDSVDNIKIDTLLDSTTDDNVSIACKFLILASKYSVSDQKFTDIAGTVRASYWYNIGISELTAFITLKEPQYRDAAIFAFKKSIQLQSNTSETWIGLGIATMDINFRVSQHCFIKATALEPKATNTWFNLAMLGLKKKDTEFAQQVLNKLQSLAPQDSSPWLGMALILEEQGDIIGSSKLFAHSFILSNGRSKAAQFMYAKNVLENHINNGDDERDIETVEKLTTASIALEQFFKKSPDSQFALQCALLTLERLHHYENANELANRLIGILEKKFEKTQDERELFNFAIIKGQFARIHLGLGNFELSIENADLSQGIISESSDEKSMKTKISNHICLGLSYFFLNDFDQTLNQFQELLSISKDSKHLVVLIAKVLYDVGESDTKEIALQELTEYIATSGADLLVTLTIAAMSILDDKREDLSIILEELKALPLSKQIIDKHKDAPYLIEEITKRLYRNDTGKQVWQRSAYFFPNNLKVWERLDKNIQRRIASNGQNKVTAEEMSKLYCESKNLRSIQRGMFLCPWNVTAVKALNECF.

TPR repeat units lie at residues I4–N37 and A47–N80. Residues S339–D397 form a disordered region. The segment covering P344–D381 has biased composition (basic and acidic residues). Over residues E382–D397 the composition is skewed to acidic residues. TPR repeat units follow at residues I425–N458, R471–N507, I508–N541, A627–D661, N702–D735, V736–H769, A945–T985, E987–A1018, and I1226–S1259.

It belongs to the SKI3 family. As to quaternary structure, component of the SKI complex composed of at least SKI2, SKI3 and SKI8. The SKI complex interacts with SKI7, which makes the link between the SKI complex and the exosome in order to perform mRNA degradation.

The protein localises to the cytoplasm. The protein resides in the nucleus. In terms of biological role, component of the SKI complex involved in 3'-mRNA degradation pathway. Represses dsRNA virus propagation by specifically blocking translation of viral mRNAs, perhaps recognizing the absence of CAP or poly(A). Essential for cell growth only in the presence of M1 replicon. This Saccharomyces cerevisiae (strain ATCC 204508 / S288c) (Baker's yeast) protein is Superkiller protein 3 (SKI3).